The chain runs to 151 residues: Deoxyuridine 5'-triphosphate nucleotidohydrolase (151 aa).

Substrate contacts are provided by residues 70-72, asparagine 83, 87-89, and methionine 97; these read RSG and LID.

Belongs to the dUTPase family. Mg(2+) serves as cofactor.

It catalyses the reaction dUTP + H2O = dUMP + diphosphate + H(+). It functions in the pathway pyrimidine metabolism; dUMP biosynthesis; dUMP from dCTP (dUTP route): step 2/2. This enzyme is involved in nucleotide metabolism: it produces dUMP, the immediate precursor of thymidine nucleotides and it decreases the intracellular concentration of dUTP so that uracil cannot be incorporated into DNA. The protein is Deoxyuridine 5'-triphosphate nucleotidohydrolase of Pseudomonas putida (strain ATCC 47054 / DSM 6125 / CFBP 8728 / NCIMB 11950 / KT2440).